The sequence spans 668 residues: tRNA 5-methylaminomethyl-2-thiouridine biosynthesis bifunctional protein MnmC (668 aa).

The segment at 1-245 (MKHYSIQPAN…KREMLCGVME (245 aa)) is tRNA (mnm(5)s(2)U34)-methyltransferase. The segment at 270–668 (IGGGIACALL…LLKGKAVKAG (399 aa)) is FAD-dependent cmnm(5)s(2)U34 oxidoreductase.

It in the N-terminal section; belongs to the methyltransferase superfamily. tRNA (mnm(5)s(2)U34)-methyltransferase family. This sequence in the C-terminal section; belongs to the DAO family. FAD is required as a cofactor.

It localises to the cytoplasm. The catalysed reaction is 5-aminomethyl-2-thiouridine(34) in tRNA + S-adenosyl-L-methionine = 5-methylaminomethyl-2-thiouridine(34) in tRNA + S-adenosyl-L-homocysteine + H(+). Functionally, catalyzes the last two steps in the biosynthesis of 5-methylaminomethyl-2-thiouridine (mnm(5)s(2)U) at the wobble position (U34) in tRNA. Catalyzes the FAD-dependent demodification of cmnm(5)s(2)U34 to nm(5)s(2)U34, followed by the transfer of a methyl group from S-adenosyl-L-methionine to nm(5)s(2)U34, to form mnm(5)s(2)U34. The protein is tRNA 5-methylaminomethyl-2-thiouridine biosynthesis bifunctional protein MnmC of Shigella boydii serotype 18 (strain CDC 3083-94 / BS512).